A 201-amino-acid chain; its full sequence is Achaete-scute complex protein T5 (201 aa).

Positions 1–10 are enriched in polar residues; it reads MALGSENHSV. The tract at residues 1–32 is disordered; the sequence is MALGSENHSVFNDDEESSSAFNGPSVIRRNAR. The bHLH domain maps to 24–90; sequence PSVIRRNARE…KMAVEYIRRL (67 aa).

As to quaternary structure, efficient DNA binding requires dimerization with another bHLH protein. As to expression, l(1)SC, SC and AC strongly label the presumptive stomatogastric nervous system, while ASE is more prominent in the presumptive procephalic lobe.

In terms of biological role, AS-C proteins are involved in the determination of the neuronal precursors in the peripheral nervous system and the central nervous system. The sequence is that of Achaete-scute complex protein T5 (ac) from Drosophila melanogaster (Fruit fly).